Consider the following 342-residue polypeptide: Peroxisomal membrane protein import receptor PEX19 (342 aa).

Positions 1–18 (MNENEYDNFDDLDDLLDE) are enriched in acidic residues. Disordered regions lie at residues 1–68 (MNEN…DPEL) and 119–141 (CSSLKSNSTDKGTVNGSNPGFKN). The segment covering 41-54 (SENKEKNAESKDSD) has biased composition (basic and acidic residues). S62 carries the phosphoserine modification. At S304 the chain carries Phosphoserine. The segment at 321–342 (IDGNDPNLGNLDKELTDGCKQQ) is disordered. The span at 331–342 (LDKELTDGCKQQ) shows a compositional bias: basic and acidic residues. C339 carries the post-translational modification Cysteine methyl ester. A lipid anchor (S-farnesyl cysteine) is attached at C339. A propeptide spans 340-342 (KQQ) (removed in mature form).

Belongs to the peroxin-19 family. As to quaternary structure, interacts (farnesylated) with PEX3; farnesylation is required for this interaction. Interacts with PEX2, PEX5, PEX10, PEX11, PEX12, PEX13, PEX14, PEX17, PEX22, PEX25, PEX30 and PEX32; the interaction requires well-defined PEX19-binding sites within the peroxisomal membrane protein targeting signal (mPTS) of the PMPs and is independent on the presence of PEX3. Interacts with VPS1.

It localises to the cytoplasm. The protein localises to the peroxisome membrane. The protein resides in the endoplasmic reticulum membrane. Required for proper post-translational import and stabilization of peroxisomal membrane proteins (PMPs). Acts as a cytosolic import receptor for PMPs and delivers them to the docking factor PEX3 at the peroxisomal membrane for subsequent insertion into the membrane. Acts as a chaperone in stabilizing or maintaining PMPs in the lipid bilayer. Directs PEX17, a peripheral component of the peroxisomal matrix protein translocation machinery, to peroxisomes. Stabilizes VPS1, a protein required for peroxisomal fission, at the peroxisomal membrane. Also acts in conjunction with PEX3 in the formation of peroxisomes from preperoxisomal compartments at the endoplasmic reticulum during de novo peroxisome synthesis, probably via the import of additional PMPs. This is Peroxisomal membrane protein import receptor PEX19 (PEX19) from Saccharomyces cerevisiae (strain ATCC 204508 / S288c) (Baker's yeast).